Reading from the N-terminus, the 173-residue chain is Nuclear transcription factor Y subunit B-8 (173 aa).

The disordered stretch occupies residues 1–30; that stretch reads MAESQAKSPGGCGSHESGGDQSPRSLHVRE. A2 bears the N-acetylalanine mark. Residues 35–41 mediate DNA binding; sequence LPIANIS. Positions 62-73 are subunit association domain (SAD); the sequence is VQECVSEFISFV. The segment at 123 to 173 is disordered; it reads DTKGSAKGGDPNAKKDGQSSQNGQFSQLAHQGPYGNSQAQQHMMVPMPGTD. Over residues 140-163 the composition is skewed to polar residues; sequence QSSQNGQFSQLAHQGPYGNSQAQQ.

Belongs to the NFYB/HAP3 subunit family. Heterotrimeric transcription factor composed of three components, NF-YA, NF-YB and NF-YC. NF-YB and NF-YC must interact and dimerize for NF-YA association and DNA binding. In terms of tissue distribution, expressed in flowers and mature rosettes.

It is found in the nucleus. Functionally, component of the NF-Y/HAP transcription factor complex. The NF-Y complex stimulates the transcription of various genes by recognizing and binding to a CCAAT motif in promoters. The sequence is that of Nuclear transcription factor Y subunit B-8 (NFYB8) from Arabidopsis thaliana (Mouse-ear cress).